Here is a 183-residue protein sequence, read N- to C-terminus: Peptidyl-tRNA hydrolase (183 aa).

A tRNA-binding site is contributed by tyrosine 15. Histidine 20 functions as the Proton acceptor in the catalytic mechanism. TRNA-binding residues include tyrosine 67 and asparagine 69.

It belongs to the PTH family. Monomer.

It localises to the cytoplasm. It carries out the reaction an N-acyl-L-alpha-aminoacyl-tRNA + H2O = an N-acyl-L-amino acid + a tRNA + H(+). In terms of biological role, hydrolyzes ribosome-free peptidyl-tRNAs (with 1 or more amino acids incorporated), which drop off the ribosome during protein synthesis, or as a result of ribosome stalling. Its function is as follows. Catalyzes the release of premature peptidyl moieties from peptidyl-tRNA molecules trapped in stalled 50S ribosomal subunits, and thus maintains levels of free tRNAs and 50S ribosomes. The protein is Peptidyl-tRNA hydrolase of Chlamydia abortus (strain DSM 27085 / S26/3) (Chlamydophila abortus).